A 265-amino-acid chain; its full sequence is Transcription factor BHLH089 (265 aa).

The segment at 1 to 132 (MDPAPTLAAE…PPPPEPPKQD (132 aa)) is disordered. Composition is skewed to gly residues over residues 17–29 (LGGG…GGRG) and 44–53 (SRGGGGGGGA). The span at 95 to 105 (SKSSGDNSSLR) shows a compositional bias: polar residues. The basic motif; degenerate stretch occupies residues 142-155 (QATDSHSLAERARR). Positions 142-192 (QATDSHSLAERARREKISERMKILQDLVPGCNKVIGKASVLDEIINYIQAL) constitute a bHLH domain. Residues 156–192 (EKISERMKILQDLVPGCNKVIGKASVLDEIINYIQAL) are helix-loop-helix motif.

Belongs to the bHLH protein family. Interacts with RSS3.

It localises to the nucleus. Transcription factor that may regulate jasmonate-regulated genes. The protein is Transcription factor BHLH089 of Oryza sativa subsp. japonica (Rice).